The sequence spans 270 residues: MANNSVMMKKKLEGKVAIVTGGASGIGEATARLFVKYGARAVVIADIQSELGRSVAESIGKERCSFVQCDVADEEQVKSMIEWTATTYGGLDVMFSNAGVLNSAAQTVKDLDLPLFDKVMRVNTRGAAVCVKQAARKMVELGRGGSIICNAGSSAVRGAHGVTDYVMSKHAVIGLVRSASMQLGAHSIRVNSVSPMAVATPLTRNQGISTPDDVQKFLMPFISLKGVPPTAEQVAEAAAFLGSDEAAFVTGHDLPVDGGVLCMPFLLGSA.

Residues 21-27 (GGASGIG), 46-48 (DIQ), 70-71 (DV), asparagine 97, 165-169 (YVMSK), and 198-202 (VATPL) contribute to the NAD(+) site.

This sequence belongs to the short-chain dehydrogenases/reductases (SDR) family. As to quaternary structure, forms homotetramers.

It catalyses the reaction (S)-8-oxocitronellyl enol = cis-cis-nepetalactol. In terms of biological role, functions as a non-oxidoreductive cyclase to promote the formation of cis-cis-nepetalactol. Cis-cis-nepetalactol is then oxidized by NEPS1 into cis-cis-nepetalactone, which belongs to a family of metabolites that are both insect-repellent and have euphoric effect in cats. Binds NAD(+) as classical short-chain dehydrogenase/reductase (SDR), but does not utilize it for its redox-neutral cyclase activity. The sequence is that of (+)-cis,cis-nepetalactol synthase NEPS3 from Nepeta racemosa (Catmint).